The following is a 215-amino-acid chain: Probable septum site-determining protein MinC (215 aa).

This sequence belongs to the MinC family. In terms of assembly, interacts with MinD and FtsZ.

Functionally, cell division inhibitor that blocks the formation of polar Z ring septums. Rapidly oscillates between the poles of the cell to destabilize FtsZ filaments that have formed before they mature into polar Z rings. Prevents FtsZ polymerization. This Clostridium botulinum (strain Alaska E43 / Type E3) protein is Probable septum site-determining protein MinC.